Here is a 203-residue protein sequence, read N- to C-terminus: Na(+)-translocating NADH-quinone reductase subunit E (203 aa).

The next 6 helical transmembrane spans lie at 11–31 (SIFIENMALSFFLGMCTFLAV), 35–55 (ISTAIGLGTAVIVVQTLTVPL), 82–102 (FLGLIAYIGVIAAVVQILEMF), 115–135 (GIFLPLITVNCAILAGSLFMV), 145–165 (MVYGVGSGVGWALAIAVMAGV), and 181–201 (LGITFITAGLMAIGFMSFSGI).

The protein belongs to the NqrDE/RnfAE family. In terms of assembly, composed of six subunits; NqrA, NqrB, NqrC, NqrD, NqrE and NqrF.

The protein resides in the cell inner membrane. The enzyme catalyses a ubiquinone + n Na(+)(in) + NADH + H(+) = a ubiquinol + n Na(+)(out) + NAD(+). NQR complex catalyzes the reduction of ubiquinone-1 to ubiquinol by two successive reactions, coupled with the transport of Na(+) ions from the cytoplasm to the periplasm. NqrA to NqrE are probably involved in the second step, the conversion of ubisemiquinone to ubiquinol. The sequence is that of Na(+)-translocating NADH-quinone reductase subunit E from Dichelobacter nodosus (strain VCS1703A).